Reading from the N-terminus, the 625-residue chain is ATP-dependent RNA helicase mrh4, mitochondrial (625 aa).

Residues 1-16 (MWKTARDSVCLICRSA) constitute a mitochondrion transit peptide. The span at 19-28 (TTTSTSARAS) shows a compositional bias: low complexity. Residues 19-119 (TTTSTSARAS…DKNTKGQKAL (101 aa)) form a disordered region. Positions 90–113 (DPRKAPKPKPVEEDSRRDKRDKNT) are enriched in basic and acidic residues. The short motif at 144-177 (QAFDQFDLLPVVKEAIAQEALKGMTEIKPTPVQR) is the Q motif element. Residues 195-406 (PKSDNGREEF…EEQFPYINRI (212 aa)) enclose the Helicase ATP-binding domain. An ATP-binding site is contributed by 208 to 215 (AETGSGKT). The short motif at 353-356 (DEAD) is the DEAD box element. One can recognise a Helicase C-terminal domain in the interval 453–625 (EGPKSEIDVK…ESMFMGQALV (173 aa)).

This sequence belongs to the DEAD box helicase family. MRH4 subfamily.

The protein resides in the mitochondrion. The enzyme catalyses ATP + H2O = ADP + phosphate + H(+). In terms of biological role, ATP-binding RNA helicase involved in mitochondrial RNA metabolism. Required for maintenance of mitochondrial DNA. This Neurospora crassa (strain ATCC 24698 / 74-OR23-1A / CBS 708.71 / DSM 1257 / FGSC 987) protein is ATP-dependent RNA helicase mrh4, mitochondrial (drh-15).